A 141-amino-acid chain; its full sequence is Endoribonuclease YbeY (141 aa).

Zn(2+)-binding residues include His-101, His-105, and His-111.

The protein belongs to the endoribonuclease YbeY family. Requires Zn(2+) as cofactor.

Its subcellular location is the cytoplasm. Its function is as follows. Single strand-specific metallo-endoribonuclease involved in late-stage 70S ribosome quality control and in maturation of the 3' terminus of the 16S rRNA. The protein is Endoribonuclease YbeY of Nitrosomonas eutropha (strain DSM 101675 / C91 / Nm57).